The primary structure comprises 428 residues: Elongation factor 1-alpha (428 aa).

Residues K5–T225 form the tr-type G domain. Positions G14 to S21 are G1. Residue G14–S21 coordinates GTP. Residue S21 coordinates Mg(2+). The segment at G70–D74 is G2. Positions D91 to G94 are G3. Residues D91 to H95 and N149 to D152 contribute to the GTP site. The tract at residues N149 to D152 is G4. Residues A189–L191 form a G5 region.

It belongs to the TRAFAC class translation factor GTPase superfamily. Classic translation factor GTPase family. EF-Tu/EF-1A subfamily.

The protein resides in the cytoplasm. It catalyses the reaction GTP + H2O = GDP + phosphate + H(+). In terms of biological role, GTP hydrolase that promotes the GTP-dependent binding of aminoacyl-tRNA to the A-site of ribosomes during protein biosynthesis. In Methanococcus maripaludis (strain C7 / ATCC BAA-1331), this protein is Elongation factor 1-alpha.